The chain runs to 159 residues: U1 small nuclear ribonucleoprotein C (159 aa).

The Matrin-type zinc-finger motif lies at phenylalanine 4–aspartate 36. Tyrosine 8 bears the Phosphotyrosine mark. The residue at position 17 (serine 17) is a Phosphoserine. The residue at position 52 (lysine 52) is an N6-acetyllysine. The disordered stretch occupies residues isoleucine 62–histidine 96. The segment covering proline 63–methionine 92 has biased composition (pro residues).

Belongs to the U1 small nuclear ribonucleoprotein C family. As to quaternary structure, component of the U1 snRNP. The U1 snRNP is composed of the U1 snRNA and the 7 core Sm proteins SNRPB, SNRPD1, SNRPD2, SNRPD3, SNRPE, SNRPF and SNRPG that assemble in a heptameric protein ring on the Sm site of the small nuclear RNA to form the core snRNP, and at least 3 U1 snRNP-specific proteins SNRNP70/U1-70K, SNRPA/U1-A and SNRPC/U1-C. SNRPC/U1-C interacts with U1 snRNA and the 5' splice-site region of the pre-mRNA. Interacts (via N-terminus) with TIA1 (via C-terminus); thereby promoting spliceosomal U1 snRNP recruitment to 5' splice sites.

It is found in the nucleus. Its function is as follows. Component of the spliceosomal U1 snRNP, which is essential for recognition of the pre-mRNA 5' splice-site and the subsequent assembly of the spliceosome. SNRPC/U1-C is directly involved in initial 5' splice-site recognition for both constitutive and regulated alternative splicing. The interaction with the 5' splice-site seems to precede base-pairing between the pre-mRNA and the U1 snRNA. Stimulates commitment or early (E) complex formation by stabilizing the base pairing of the 5' end of the U1 snRNA and the 5' splice-site region. This is U1 small nuclear ribonucleoprotein C from Rattus norvegicus (Rat).